Reading from the N-terminus, the 272-residue chain is Cell shape-determining protein MreC (272 aa).

The Cytoplasmic portion of the chain corresponds to 1-8 (MNRFKKSK). Residues 9 to 29 (YVIIVFVTVLLVSALLATTYS) traverse the membrane as a helical segment. Topologically, residues 30–272 (STIVTKLGDG…VDVIELVGNS (243 aa)) are extracellular. A coiled-coil region spans residues 64-112 (LTRTYNENESLKKQLYQLEVKSNEVESLKTENEQLRQLLDMKSKLQATK).

This sequence belongs to the MreC family. In terms of assembly, homodimer. Interacts with a number of proteins in the elongasome, including PBP1a (pbpA), PBP1b, PBP2a, PBP2b (penA), StkP, MltG, MreD and RodZ.

The protein resides in the cell membrane. Functionally, involved in formation and maintenance of cell shape, probably part of the elongasome which synthesizes peripheral peptidoglycan (PG). The polypeptide is Cell shape-determining protein MreC (Streptococcus pneumoniae (strain ATCC BAA-255 / R6)).